We begin with the raw amino-acid sequence, 204 residues long: Pro-glucagon (204 aa).

Positions 1–20 are cleaved as a signal peptide; sequence MTSMYFVAGLLLMIVQGSWQ. Residues 84–109 constitute a propeptide that is removed on maturation; the sequence is SGQQGVEEREKENLLDQLSSNGLARH. Arginine amide is present on Arg-145. 2 consecutive propeptides follow at residues 149–161 and 197–204; these read DFLEEAGTADDIG and RDLLGEYQ.

It belongs to the glucagon family. As to expression, isoform LPII is expressed in both pancreas and intestine. Expression of isoform LPI is restricted to the pancreas. Neither isoform is detected in salivary glands.

It localises to the secreted. Its function is as follows. Plays a key role in glucose metabolism and homeostasis. Regulates blood glucose by increasing gluconeogenesis and decreasing glycolysis. In terms of biological role, potent stimulator of glucose-dependent insulin release. Plays important roles on gastric motility and the suppression of plasma glucagon levels. Functionally, stimulates intestinal growth and up-regulates villus height in the small intestine, concomitant with increased crypt cell proliferation and decreased enterocyte apoptosis. In Heloderma suspectum (Gila monster), this protein is Pro-glucagon (GCG).